Consider the following 454-residue polypeptide: Bifunctional protein GlmU (454 aa).

A pyrophosphorylase region spans residues 1 to 226; sequence MALNVVILAA…AVEVEGANNR (226 aa). UDP-N-acetyl-alpha-D-glucosamine contacts are provided by residues 8–11, K22, Q73, 78–79, 100–102, G137, E151, N166, and N224; these read LAAG, GT, and YGD. D102 contacts Mg(2+). N224 is a Mg(2+) binding site. Residues 227-247 form a linker region; sequence VQLAQLERAYQARAAEKLMLE. The interval 248-454 is N-acetyltransferase; the sequence is GANLRDPARI…GWPRPVKLKK (207 aa). R330 and K348 together coordinate UDP-N-acetyl-alpha-D-glucosamine. The active-site Proton acceptor is H360. UDP-N-acetyl-alpha-D-glucosamine-binding residues include Y363 and N374. Acetyl-CoA contacts are provided by residues A377, 383-384, S402, A420, and R437; that span reads NY.

This sequence in the N-terminal section; belongs to the N-acetylglucosamine-1-phosphate uridyltransferase family. In the C-terminal section; belongs to the transferase hexapeptide repeat family. As to quaternary structure, homotrimer. Mg(2+) serves as cofactor.

It localises to the cytoplasm. It catalyses the reaction alpha-D-glucosamine 1-phosphate + acetyl-CoA = N-acetyl-alpha-D-glucosamine 1-phosphate + CoA + H(+). It carries out the reaction N-acetyl-alpha-D-glucosamine 1-phosphate + UTP + H(+) = UDP-N-acetyl-alpha-D-glucosamine + diphosphate. It functions in the pathway nucleotide-sugar biosynthesis; UDP-N-acetyl-alpha-D-glucosamine biosynthesis; N-acetyl-alpha-D-glucosamine 1-phosphate from alpha-D-glucosamine 6-phosphate (route II): step 2/2. Its pathway is nucleotide-sugar biosynthesis; UDP-N-acetyl-alpha-D-glucosamine biosynthesis; UDP-N-acetyl-alpha-D-glucosamine from N-acetyl-alpha-D-glucosamine 1-phosphate: step 1/1. The protein operates within bacterial outer membrane biogenesis; LPS lipid A biosynthesis. Its function is as follows. Catalyzes the last two sequential reactions in the de novo biosynthetic pathway for UDP-N-acetylglucosamine (UDP-GlcNAc). The C-terminal domain catalyzes the transfer of acetyl group from acetyl coenzyme A to glucosamine-1-phosphate (GlcN-1-P) to produce N-acetylglucosamine-1-phosphate (GlcNAc-1-P), which is converted into UDP-GlcNAc by the transfer of uridine 5-monophosphate (from uridine 5-triphosphate), a reaction catalyzed by the N-terminal domain. This is Bifunctional protein GlmU from Shewanella pealeana (strain ATCC 700345 / ANG-SQ1).